Consider the following 141-residue polypeptide: Hemoglobin subunit alpha (141 aa).

The 141-residue stretch at 1–141 folds into the Globin domain; it reads VLSANDKANV…VSTVLTSKYR (141 aa). Ser-3 carries the phosphoserine modification. N6-succinyllysine is present on residues Lys-7 and Lys-11. Lys-16 carries the post-translational modification N6-acetyllysine; alternate. Lys-16 carries the N6-succinyllysine; alternate modification. Tyr-24 carries the phosphotyrosine modification. Phosphoserine is present on Ser-35. Lys-40 is modified (N6-succinyllysine). Ser-49 carries the post-translational modification Phosphoserine. Residue His-58 coordinates O2. Heme b is bound at residue His-87. Residue Ser-102 is modified to Phosphoserine. Thr-108 carries the post-translational modification Phosphothreonine. Ser-124 and Ser-131 each carry phosphoserine. A phosphothreonine mark is found at Thr-134 and Thr-137. A Phosphoserine modification is found at Ser-138.

This sequence belongs to the globin family. As to quaternary structure, heterotetramer of two alpha chains and two beta chains. Red blood cells.

In terms of biological role, involved in oxygen transport from the lung to the various peripheral tissues. Hemopressin acts as an antagonist peptide of the cannabinoid receptor CNR1. Hemopressin-binding efficiently blocks cannabinoid receptor CNR1 and subsequent signaling. This Suncus murinus (Asian house shrew) protein is Hemoglobin subunit alpha (HBA).